The following is a 199-amino-acid chain: Holliday junction resolvase RecU (199 aa).

Mg(2+) is bound by residues threonine 82, aspartate 84, glutamate 97, and glutamine 116.

It belongs to the RecU family. It depends on Mg(2+) as a cofactor.

The protein resides in the cytoplasm. The catalysed reaction is Endonucleolytic cleavage at a junction such as a reciprocal single-stranded crossover between two homologous DNA duplexes (Holliday junction).. Endonuclease that resolves Holliday junction intermediates in genetic recombination. Cleaves mobile four-strand junctions by introducing symmetrical nicks in paired strands. Promotes annealing of linear ssDNA with homologous dsDNA. Required for DNA repair, homologous recombination and chromosome segregation. The polypeptide is Holliday junction resolvase RecU (Streptococcus agalactiae serotype Ia (strain ATCC 27591 / A909 / CDC SS700)).